We begin with the raw amino-acid sequence, 147 residues long: UPF0735 ACT domain-containing protein BH1214 (147 aa).

An ACT domain is found at 70-145; it reads TLSINLEDRS…AVEKVELVGS (76 aa).

It belongs to the UPF0735 family.

In Halalkalibacterium halodurans (strain ATCC BAA-125 / DSM 18197 / FERM 7344 / JCM 9153 / C-125) (Bacillus halodurans), this protein is UPF0735 ACT domain-containing protein BH1214.